We begin with the raw amino-acid sequence, 72 residues long: Toxin Acra II-3 (72 aa).

Residues 4–67 (PGNYPLDTRG…VWNAAKNYCK (64 aa)) enclose the LCN-type CS-alpha/beta domain. Cystine bridges form between C18-C41, C27-C46, and C31-C48.

This sequence belongs to the long (3 C-C) scorpion toxin superfamily. Sodium channel inhibitor family. Beta subfamily. In terms of tissue distribution, expressed by the venom gland.

The protein localises to the secreted. Its function is as follows. Binds to sodium channels (Nav) and affects the channel activation process. The protein is Toxin Acra II-3 of Androctonus crassicauda (Arabian fat-tailed scorpion).